We begin with the raw amino-acid sequence, 352 residues long: Phosphoribosylformylglycinamidine cyclo-ligase (352 aa).

It belongs to the AIR synthase family.

Its subcellular location is the cytoplasm. The enzyme catalyses 2-formamido-N(1)-(5-O-phospho-beta-D-ribosyl)acetamidine + ATP = 5-amino-1-(5-phospho-beta-D-ribosyl)imidazole + ADP + phosphate + H(+). Its pathway is purine metabolism; IMP biosynthesis via de novo pathway; 5-amino-1-(5-phospho-D-ribosyl)imidazole from N(2)-formyl-N(1)-(5-phospho-D-ribosyl)glycinamide: step 2/2. The polypeptide is Phosphoribosylformylglycinamidine cyclo-ligase (Stenotrophomonas maltophilia (strain R551-3)).